Reading from the N-terminus, the 80-residue chain is HssA/B-like protein 2 (80 aa).

The interval 1 to 29 (MSLLSALTSISKPMNTSSKSSVSSKNVSG) is disordered. Low complexity predominate over residues 9-29 (SISKPMNTSSKSSVSSKNVSG).

The protein belongs to the hssA/B family.

The protein is HssA/B-like protein 2 (hssl2) of Dictyostelium discoideum (Social amoeba).